Reading from the N-terminus, the 465-residue chain is 6-phospho-beta-glucosidase GmuD (465 aa).

E170 functions as the Proton donor in the catalytic mechanism. The Nucleophile role is filled by E368.

It belongs to the glycosyl hydrolase 1 family.

The enzyme catalyses 6-phospho-beta-D-glucosyl-(1-&gt;4)-D-glucose + H2O = D-glucose 6-phosphate + D-glucose. In terms of biological role, phospho-beta-D-glucosidase that seems to be involved in the degradation of glucomannan. Is also capable of hydrolyzing aryl-phospho-beta-D-glucosides, although very weakly, and plays only a minor role, if any, in the degradation of these substrates in vivo. This Bacillus subtilis (strain 168) protein is 6-phospho-beta-glucosidase GmuD (gmuD).